Reading from the N-terminus, the 209-residue chain is NADH-ubiquinone oxidoreductase subunit 9 (209 aa).

This sequence belongs to the complex I 30 kDa subunit family. Complex I is composed of about 45 different subunits.

It is found in the mitochondrion inner membrane. It catalyses the reaction a ubiquinone + NADH + 5 H(+)(in) = a ubiquinol + NAD(+) + 4 H(+)(out). In terms of biological role, core subunit of the mitochondrial membrane respiratory chain NADH dehydrogenase (Complex I) that is believed to belong to the minimal assembly required for catalysis. Complex I functions in the transfer of electrons from NADH to the respiratory chain. The immediate electron acceptor for the enzyme is believed to be ubiquinone. In Dictyostelium discoideum (Social amoeba), this protein is NADH-ubiquinone oxidoreductase subunit 9 (nad9).